Here is a 418-residue protein sequence, read N- to C-terminus: Putative F-box protein At3g23950 (418 aa).

Residues 1-42 (MNIPPELTFEVLVRLPLKSLARFRSMCKEWKLVIDSEFFRDC) enclose the F-box domain.

The chain is Putative F-box protein At3g23950 from Arabidopsis thaliana (Mouse-ear cress).